We begin with the raw amino-acid sequence, 273 residues long: Dermonecrotic toxin LhSicTox-alphaIA2aviii (273 aa).

His5 is an active-site residue. Mg(2+)-binding residues include Glu25 and Asp27. Residue His41 is the Nucleophile of the active site. 2 disulfide bridges follow: Cys45–Cys51 and Cys47–Cys190. Asp85 contacts Mg(2+).

Belongs to the arthropod phospholipase D family. Class II subfamily. Mg(2+) serves as cofactor. In terms of tissue distribution, expressed by the venom gland.

The protein localises to the secreted. It carries out the reaction an N-(acyl)-sphingosylphosphocholine = an N-(acyl)-sphingosyl-1,3-cyclic phosphate + choline. The enzyme catalyses an N-(acyl)-sphingosylphosphoethanolamine = an N-(acyl)-sphingosyl-1,3-cyclic phosphate + ethanolamine. The catalysed reaction is a 1-acyl-sn-glycero-3-phosphocholine = a 1-acyl-sn-glycero-2,3-cyclic phosphate + choline. It catalyses the reaction a 1-acyl-sn-glycero-3-phosphoethanolamine = a 1-acyl-sn-glycero-2,3-cyclic phosphate + ethanolamine. Its function is as follows. Dermonecrotic toxins cleave the phosphodiester linkage between the phosphate and headgroup of certain phospholipids (sphingolipid and lysolipid substrates), forming an alcohol (often choline) and a cyclic phosphate. This toxin acts on sphingomyelin (SM). It may also act on ceramide phosphoethanolamine (CPE), lysophosphatidylcholine (LPC) and lysophosphatidylethanolamine (LPE), but not on lysophosphatidylserine (LPS), and lysophosphatidylglycerol (LPG). It acts by transphosphatidylation, releasing exclusively cyclic phosphate products as second products. Induces dermonecrosis, hemolysis, increased vascular permeability, edema, inflammatory response, and platelet aggregation. The chain is Dermonecrotic toxin LhSicTox-alphaIA2aviii from Loxosceles hirsuta (Recluse spider).